The sequence spans 86 residues: Cytochrome c oxidase subunit 6B1 (86 aa).

The residue at position 2 (Ala-2) is an N-acetylalanine. The region spanning 27–73 (TRNCWQNYLDFHRCQKAMTAKGGDISVCEWYQRVYQSLCPTSWVTDW) is the CHCH domain. The Cx9C motif signature appears at 30 to 40 (CWQNYLDFHRC). 2 cysteine pairs are disulfide-bonded: Cys-30–Cys-65 and Cys-40–Cys-54. The short motif at 54 to 65 (CEWYQRVYQSLC) is the Cx10C motif element.

This sequence belongs to the cytochrome c oxidase subunit 6B family. As to quaternary structure, component of the cytochrome c oxidase (complex IV, CIV), a multisubunit enzyme composed of 14 subunits. The complex is composed of a catalytic core of 3 subunits MT-CO1, MT-CO2 and MT-CO3, encoded in the mitochondrial DNA, and 11 supernumerary subunits COX4I1 (or COX4I2), COX5A, COX5B, COX6A1 (or COX6A2), COX6B1 (or COX6B2), COX6C, COX7A2 (or COX7A1), COX7B, COX7C, COX8A and NDUFA4, which are encoded in the nuclear genome. The complex exists as a monomer or a dimer and forms supercomplexes (SCs) in the inner mitochondrial membrane with NADH-ubiquinone oxidoreductase (complex I, CI) and ubiquinol-cytochrome c oxidoreductase (cytochrome b-c1 complex, complex III, CIII), resulting in different assemblies (supercomplex SCI(1)III(2)IV(1) and megacomplex MCI(2)III(2)IV(2)).

Its subcellular location is the mitochondrion inner membrane. It participates in energy metabolism; oxidative phosphorylation. Functionally, component of the cytochrome c oxidase, the last enzyme in the mitochondrial electron transport chain which drives oxidative phosphorylation. The respiratory chain contains 3 multisubunit complexes succinate dehydrogenase (complex II, CII), ubiquinol-cytochrome c oxidoreductase (cytochrome b-c1 complex, complex III, CIII) and cytochrome c oxidase (complex IV, CIV), that cooperate to transfer electrons derived from NADH and succinate to molecular oxygen, creating an electrochemical gradient over the inner membrane that drives transmembrane transport and the ATP synthase. Cytochrome c oxidase is the component of the respiratory chain that catalyzes the reduction of oxygen to water. Electrons originating from reduced cytochrome c in the intermembrane space (IMS) are transferred via the dinuclear copper A center (CU(A)) of subunit 2 and heme A of subunit 1 to the active site in subunit 1, a binuclear center (BNC) formed by heme A3 and copper B (CU(B)). The BNC reduces molecular oxygen to 2 water molecules using 4 electrons from cytochrome c in the IMS and 4 protons from the mitochondrial matrix. This is Cytochrome c oxidase subunit 6B1 (COX6B1) from Homo sapiens (Human).